We begin with the raw amino-acid sequence, 292 residues long: MPWIQIRINATAKTADKVSNMLLGRGAQAVTFMDAKDVPVYEPMPGETPLWGETEVMGLFDAETDPAPTIAFFQQIFGEDVGYKVEQLEDKDWVREWMDHFHPMQFGERLWICPSWRDVPNPDAVNVMLDPGLAFGTGTHPTTALCLQWLDGLDLAGKTVVDFGCGSGILGIAALKLGAARVIGIDIDPQAIQASRDNAERNGVADQIELYLPADQPQDVEADVVVANILAGPLRELAPLIAGHGKAGSLMALSGVLESQAPELETIYGQWFEMDPTAVKEEWCRLSGRKLG.

Residues Thr143, Gly164, Asp186, and Asn228 each contribute to the S-adenosyl-L-methionine site.

It belongs to the methyltransferase superfamily. PrmA family.

The protein localises to the cytoplasm. The enzyme catalyses L-lysyl-[protein] + 3 S-adenosyl-L-methionine = N(6),N(6),N(6)-trimethyl-L-lysyl-[protein] + 3 S-adenosyl-L-homocysteine + 3 H(+). In terms of biological role, methylates ribosomal protein L11. In Aeromonas hydrophila subsp. hydrophila (strain ATCC 7966 / DSM 30187 / BCRC 13018 / CCUG 14551 / JCM 1027 / KCTC 2358 / NCIMB 9240 / NCTC 8049), this protein is Ribosomal protein L11 methyltransferase.